Consider the following 205-residue polypeptide: Small ribosomal subunit protein uS4B (205 aa).

Residues 94 to 157 enclose the S4 RNA-binding domain; sequence RRLDNVVFRA…LNLPIVLGTL (64 aa).

Belongs to the universal ribosomal protein uS4 family. As to quaternary structure, part of the 30S ribosomal subunit. Contacts protein S5. The interaction surface between S4 and S5 is involved in control of translational fidelity.

One of the primary rRNA binding proteins, it binds directly to 16S rRNA where it nucleates assembly of the body of the 30S subunit. Its function is as follows. With S5 and S12 plays an important role in translational accuracy. The polypeptide is Small ribosomal subunit protein uS4B (Nitrosomonas europaea (strain ATCC 19718 / CIP 103999 / KCTC 2705 / NBRC 14298)).